Consider the following 629-residue polypeptide: Citrate (Re)-synthase (629 aa).

Residues 59–329 form the Pyruvate carboxyltransferase domain; that stretch reads IFITDTTFRD…TNGIDTTVIT (271 aa). The Cache domain maps to 497 to 601; the sequence is VMQRFIEEYP…GVDIRVEDLV (105 aa).

This sequence belongs to the alpha-IPM synthase/homocitrate synthase family. As to quaternary structure, homotetramer. The cofactor is Co(2+). Mn(2+) serves as cofactor.

The enzyme catalyses oxaloacetate + acetyl-CoA + H2O = citrate + CoA + H(+). Inhibited by p-hydroxymercuribenzoate and EDTA. In terms of biological role, catalyzes the condensation of the acetyl group of acetyl-CoA with oxaloacetate to form citrate. In Syntrophus aciditrophicus (strain SB), this protein is Citrate (Re)-synthase.